Reading from the N-terminus, the 361-residue chain is Adenosine kinase (361 aa).

A Nuclear localization signal motif is present at residues 7–15 (PKPKKLKVE). Residue Asp34 coordinates adenosine. Residue Ser48 coordinates Mg(2+). Tyr76 is modified (phosphotyrosine). Asn147 serves as a coordination point for Mg(2+). Gln305 provides a ligand contact to adenosine. Asp316 is a catalytic residue. Asp316 acts as the Proton acceptor in catalysis.

The protein belongs to the carbohydrate kinase PfkB family. Monomer. It depends on Mg(2+) as a cofactor.

It localises to the nucleus. The enzyme catalyses adenosine + ATP = AMP + ADP + H(+). It functions in the pathway purine metabolism; AMP biosynthesis via salvage pathway; AMP from adenosine: step 1/1. Functionally, catalyzes the phosphorylation of the purine nucleoside adenosine at the 5' position in an ATP-dependent manner. Serves as a potential regulator of concentrations of extracellular adenosine and intracellular adenine nucleotides. The sequence is that of Adenosine kinase (Adk) from Rattus norvegicus (Rat).